The following is a 156-amino-acid chain: Small ribosomal subunit protein uS7 (156 aa).

It belongs to the universal ribosomal protein uS7 family. Part of the 30S ribosomal subunit. Contacts proteins S9 and S11.

Its function is as follows. One of the primary rRNA binding proteins, it binds directly to 16S rRNA where it nucleates assembly of the head domain of the 30S subunit. Is located at the subunit interface close to the decoding center, probably blocks exit of the E-site tRNA. The chain is Small ribosomal subunit protein uS7 from Streptococcus pyogenes serotype M1.